We begin with the raw amino-acid sequence, 130 residues long: ER membrane protein complex subunit 5 (130 aa).

At 1 to 3 the chain is on the cytoplasmic side; that stretch reads MAS. The helical transmembrane segment at 4–22 threads the bilayer; that stretch reads SFWKGVVGIGLFALAHAAF. The Lumenal segment spans residues 23 to 43; that stretch reads SAAQHRSYMRLTEKENETLPI. Residues 44 to 63 traverse the membrane as a helical segment; sequence DIVLQTLLSFVITCYGIVHI. The Cytoplasmic portion of the chain corresponds to 64–130; sequence SGEFKDMDAS…LRLRKLENFH (67 aa).

The protein belongs to the membrane magnesium transporter (TC 1.A.67) family. In terms of assembly, component of the ER membrane protein complex (EMC).

It is found in the endoplasmic reticulum membrane. The protein localises to the golgi apparatus membrane. The protein resides in the early endosome membrane. Functionally, part of the endoplasmic reticulum membrane protein complex (EMC) that enables the energy-independent insertion into endoplasmic reticulum membranes of newly synthesized membrane proteins. Preferentially accommodates proteins with transmembrane domains that are weakly hydrophobic or contain destabilizing features such as charged and aromatic residues. Involved in the cotranslational insertion of multi-pass membrane proteins in which stop-transfer membrane-anchor sequences become ER membrane spanning helices. It is also required for the post-translational insertion of tail-anchored/TA proteins in endoplasmic reticulum membranes. By mediating the proper cotranslational insertion of N-terminal transmembrane domains in an N-exo topology, with translocated N-terminus in the lumen of the ER, controls the topology of multi-pass membrane proteins like the G protein-coupled receptors. By regulating the insertion of various proteins in membranes, it is indirectly involved in many cellular processes. May be involved in Mg(2+) transport. The polypeptide is ER membrane protein complex subunit 5 (Danio rerio (Zebrafish)).